The chain runs to 317 residues: MASVIPASNRSMRSDRNTYVGKRFVHVKNPYLDLMDEDILYHLDLGTKTHNLPAMFGDVKFVCVGGSPNRMKAFALFMHKELGFEEAEEDIKDICAGTDRYCMYKTGPVLAISHGMGIPSISIMLHELIKLLHHARCCDVTIIRIGTSGGIGIAPGTVVITDIAVDSFFKPRFEQVILDNIVTRSTELDKELSEELFNCSKEIPNFPTLVGHTMCTYDFYEGQGRLDGALCSFSREKKLDYLKRAFKAGVRNIEMESTVFAAMCGLCGLKAAVVCVTLLDRLDCDQINLPHDVLVEYQQRPQLLISNFIRRRLGLCD.

Phosphate contacts are provided by residues glycine 66, arginine 100, and 144-147; that span reads RIGT. Cysteine 95 and cysteine 102 are oxidised to a cystine. Uridine is bound by residues 148–149 and 223–225; these read SG and QGR.

Belongs to the PNP/UDP phosphorylase family. Homodimer. Predominantly expressed in kidney.

The enzyme catalyses uridine + phosphate = alpha-D-ribose 1-phosphate + uracil. The catalysed reaction is 2'-deoxyuridine + phosphate = 2-deoxy-alpha-D-ribose 1-phosphate + uracil. Its pathway is pyrimidine metabolism; UMP biosynthesis via salvage pathway; uracil from uridine (phosphorylase route): step 1/1. With respect to regulation, a conditional disulfide bridge can form within the protein that dislocates a critical phosphate-coordinating arginine Arg-100 away from the active site, disabling the enzyme. Its function is as follows. Catalyzes the reversible phosphorylytic cleavage of uridine to uracil and ribose-1-phosphate which can then be utilized as carbon and energy sources or in the rescue of pyrimidine bases for nucleotide synthesis. Shows broad substrate specificity and can also accept deoxyuridine and other analogous compounds. The polypeptide is Uridine phosphorylase 2 (Homo sapiens (Human)).